The primary structure comprises 417 residues: Mitochondrial tRNA-specific 2-thiouridylase 1 (417 aa).

Residues 32-39 (AMSSGVDS) and methionine 58 each bind ATP. An interaction with target base in tRNA region spans residues 122–124 (NPD). Cysteine 127 (nucleophile) is an active-site residue. A disulfide bridge links cysteine 127 with cysteine 229. Glycine 154 lines the ATP pocket. The interaction with tRNA stretch occupies residues 179-181 (KDQ). Residue cysteine 229 is the Cysteine persulfide intermediate of the active site. Residues 354–355 (RS) form an interaction with tRNA region.

The protein belongs to the MnmA/TRMU family.

The protein localises to the mitochondrion. The enzyme catalyses 5-taurinomethyluridine(34) in tRNA + S-sulfanyl-L-cysteinyl-[protein] + AH2 + ATP = 5-taurinomethyl-2-thiouridine(34) in tRNA + L-cysteinyl-[protein] + A + AMP + diphosphate + H(+). Functionally, catalyzes the 2-thiolation of uridine at the wobble position (U34) of mitochondrial tRNA(Lys), tRNA(Glu) and tRNA(Gln). Required for the formation of 5-taurinomethyl-2-thiouridine (tm5s2U) of mitochondrial tRNA(Lys), tRNA(Glu), and tRNA(Gln) at the wobble position. ATP is required to activate the C2 atom of the wobble base. The sequence is that of Mitochondrial tRNA-specific 2-thiouridylase 1 (SLM3) from Saccharomyces cerevisiae (strain ATCC 204508 / S288c) (Baker's yeast).